A 314-amino-acid polypeptide reads, in one-letter code: tRNA dimethylallyltransferase (314 aa).

12–19 (GPTGTGKS) contacts ATP. 14 to 19 (TGTGKS) contributes to the substrate binding site.

The protein belongs to the IPP transferase family. Monomer. It depends on Mg(2+) as a cofactor.

It carries out the reaction adenosine(37) in tRNA + dimethylallyl diphosphate = N(6)-dimethylallyladenosine(37) in tRNA + diphosphate. Catalyzes the transfer of a dimethylallyl group onto the adenine at position 37 in tRNAs that read codons beginning with uridine, leading to the formation of N6-(dimethylallyl)adenosine (i(6)A). This chain is tRNA dimethylallyltransferase, found in Mycolicibacterium paratuberculosis (strain ATCC BAA-968 / K-10) (Mycobacterium paratuberculosis).